Consider the following 109-residue polypeptide: Small ribosomal subunit protein bS6 (109 aa).

The protein belongs to the bacterial ribosomal protein bS6 family.

Binds together with bS18 to 16S ribosomal RNA. This is Small ribosomal subunit protein bS6 from Dehalococcoides mccartyi (strain ATCC BAA-2266 / KCTC 15142 / 195) (Dehalococcoides ethenogenes (strain 195)).